Here is a 122-residue protein sequence, read N- to C-terminus: Serum amyloid A-3 protein (122 aa).

A signal peptide spans 1–18 (MKPFLAIIFCFLILGVDS). The tract at residues 100–122 (ANKWGRSGKDPNHFRPAGLPSKY) is disordered.

It belongs to the SAA family. In terms of tissue distribution, expressed by the liver; secreted in plasma.

Its subcellular location is the secreted. Its function is as follows. Major acute phase reactant. Apolipoprotein of the HDL complex. In vitro exhibits antimicrobial activity against Escherichia coli, Streptococcus uberis and Pseudomonas aeruginosa. This is Serum amyloid A-3 protein (SAA3) from Mesocricetus auratus (Golden hamster).